The chain runs to 1340 residues: TSET complex member tstE (1340 aa).

Low complexity predominate over residues 56 to 67; sequence NQSQTSPNSNDG. Disordered stretches follow at residues 56-75 and 110-131; these read NQSQ…GSGG and SGSG…GGGQ. WD repeat units lie at residues 208–246, 250–294, 345–384, and 397–436; these read VNQI…VIGK, DPTE…LQTI, GHKK…SFLN, and IEHS…NPQE. The segment covering 1216–1251 has biased composition (polar residues); sequence KSHMSSTTTLRRSPSIENIRTTSTTFDSSKFNTDNQ. The interval 1216–1340 is disordered; that stretch reads KSHMSSTTTL…TPTPTTTLSS (125 aa). Residues 1252–1275 are compositionally biased toward acidic residues; that stretch reads ELFDDDSDDDSDSGADADVDSENE. Residues 1286–1318 show a composition bias toward polar residues; that stretch reads ASLQHNDNSSLTNITVTDNDSNLDQDITSNTGS. A compositionally biased stretch (low complexity) spans 1328 to 1340; the sequence is LSSTPTPTTTLSS.

In terms of assembly, component of the TSET complex, a heterohexamer composed of tstA, tstB, tstC, tstD, tstE and tstF, which may act in plasma membrane turnover. tstA, tstB, tstC and tstD are likely to be the core complex members with tstE and tstF acting as associated scaffold proteins.

The chain is TSET complex member tstE from Dictyostelium discoideum (Social amoeba).